A 128-amino-acid polypeptide reads, in one-letter code: Sulfurtransferase TusD (128 aa).

Catalysis depends on Cys78, which acts as the Cysteine persulfide intermediate.

It belongs to the DsrE/TusD family. In terms of assembly, heterohexamer, formed by a dimer of trimers. The hexameric TusBCD complex contains 2 copies each of TusB, TusC and TusD. The TusBCD complex interacts with TusE.

It localises to the cytoplasm. Its function is as follows. Part of a sulfur-relay system required for 2-thiolation of 5-methylaminomethyl-2-thiouridine (mnm(5)s(2)U) at tRNA wobble positions. Accepts sulfur from TusA and transfers it in turn to TusE. The protein is Sulfurtransferase TusD of Shigella dysenteriae serotype 1 (strain Sd197).